Consider the following 1043-residue polypeptide: Unconventional myosin-Ia (1043 aa).

The region spanning valine 8–arginine 694 is the Myosin motor domain. Glycine 101–threonine 108 contributes to the ATP binding site. The segment at valine 571–glutamate 593 is actin-binding. 3 consecutive IQ domains span residues leucine 697 to leucine 719, methionine 720 to lysine 742, and isoleucine 743 to alanine 772. A TH1 domain is found at lysine 858 to valine 1042.

It belongs to the TRAFAC class myosin-kinesin ATPase superfamily. Myosin family. Post-translationally, phosphorylated by ALPK1.

Functionally, involved in directing the movement of organelles along actin filaments. This Homo sapiens (Human) protein is Unconventional myosin-Ia (MYO1A).